The following is an 81-amino-acid chain: Photosystem I iron-sulfur center (81 aa).

2 consecutive 4Fe-4S ferredoxin-type domains span residues 2 to 31 (SHAV…MVPW) and 37 to 68 (GQIA…IRVY). [4Fe-4S] cluster-binding residues include cysteine 11, cysteine 14, cysteine 17, cysteine 21, cysteine 48, cysteine 51, cysteine 54, and cysteine 58.

The cyanobacterial PSI reaction center is composed of one copy each of PsaA,B,C,D,E,F,I,J,K,L,M and X, and forms trimeric complexes. [4Fe-4S] cluster serves as cofactor.

Its subcellular location is the cellular thylakoid membrane. The catalysed reaction is reduced [plastocyanin] + hnu + oxidized [2Fe-2S]-[ferredoxin] = oxidized [plastocyanin] + reduced [2Fe-2S]-[ferredoxin]. Apoprotein for the two 4Fe-4S centers FA and FB of photosystem I (PSI); essential for photochemical activity. FB is the terminal electron acceptor of PSI, donating electrons to ferredoxin. The C-terminus interacts with PsaA/B/D and helps assemble the protein into the PSI complex. Required for binding of PsaD and PsaE to PSI. PSI is a plastocyanin/cytochrome c6-ferredoxin oxidoreductase, converting photonic excitation into a charge separation, which transfers an electron from the donor P700 chlorophyll pair to the spectroscopically characterized acceptors A0, A1, FX, FA and FB in turn. The protein is Photosystem I iron-sulfur center of Synechococcus sp. (strain WH7803).